The sequence spans 318 residues: tRNA uridine(34) hydroxylase (318 aa).

In terms of domain architecture, Rhodanese spans 123–217 (EDDDTVIIDA…YGKDPETKGE (95 aa)). The Cysteine persulfide intermediate role is filled by Cys177.

It belongs to the TrhO family.

It catalyses the reaction uridine(34) in tRNA + AH2 + O2 = 5-hydroxyuridine(34) in tRNA + A + H2O. Its function is as follows. Catalyzes oxygen-dependent 5-hydroxyuridine (ho5U) modification at position 34 in tRNAs. In Staphylococcus aureus (strain USA300), this protein is tRNA uridine(34) hydroxylase.